We begin with the raw amino-acid sequence, 115 residues long: Non-specific lipid-transfer protein 4.1 (115 aa).

An N-terminal signal peptide occupies residues 1 to 25 (MARAAASQLVLVALVAAMLLVAADA). 4 disulfide bridges follow: Cys29-Cys77, Cys39-Cys54, Cys55-Cys97, and Cys75-Cys111.

This sequence belongs to the plant LTP family.

Plant non-specific lipid-transfer proteins transfer phospholipids as well as galactolipids across membranes. May play a role in wax or cutin deposition in the cell walls of expanding epidermal cells and certain secretory tissues. This is Non-specific lipid-transfer protein 4.1 (LTP4.1) from Hordeum vulgare (Barley).